A 369-amino-acid polypeptide reads, in one-letter code: Putative 2-aminoethylphosphonate import ATP-binding protein PhnT (369 aa).

An ABC transporter domain is found at 19–250 (IVLDSLRVAY…PPNRFASEFL (232 aa)). Residue 51-58 (GPSGSGKT) coordinates ATP.

It belongs to the ABC transporter superfamily. 2-aminoethylphosphonate importer (TC 3.A.1.11.5) family.

The protein localises to the cell inner membrane. In terms of biological role, probably part of the PhnSTUV complex (TC 3.A.1.11.5) involved in 2-aminoethylphosphonate import. Probably responsible for energy coupling to the transport system. This Salmonella choleraesuis (strain SC-B67) protein is Putative 2-aminoethylphosphonate import ATP-binding protein PhnT (phnT).